An 891-amino-acid chain; its full sequence is MSGVNDIRSAFLNYFAKNGHDIVPSSPLVPRNDPTLMFTNAGMVQFKNVFTGLEKRPYQRATTSQKCVRAGGKHNDLDNVGYTARHLTFFEMLGNFSFGDYFKERAIELAWNLITKEYGLKKDKLLVTVYHTDDEAASYWKKIAGFSDDRIIRIPTSDNFWAMGDTGPCGPCSEIFIDQGEHIFGGPPGSPEEDGDRFLEFWNLVFMQYEQVTKDERLPLPRPSIDTGMGLERMANILQGVDSVFETDLFRSLIDATSSALGRGPGEEDAASFRVIADHLRSSSFLIADGVLPSNEGRGYVLRRIMRRAMRHAQLLGASEPLMWRLVWALVREMGQAYPELVRAEAMIEETMRLEETRFRKTLDRGLAILDEKSASLKKGDMFDGDTAFTLYDTYGFPLDLTQDALRNRGISVDIASFTDAMDRQRAKARASWAGSGEAATETVWFGLREKLGATEFLGYDTETAEGVVTALVADGKEVDALKAGDSGAIVLNQTPFYAESGGQVGDTGVLSGDGVRFRVTDTLKKAGDLFVHFGTVEEGAIKRDAALQLDVDHARRSSIRANHSATHLLHEALRQVLGDHIAQKGSMVAPDRLRFDFVHQKPITPDELRRVEDIANDIVLENDEVTTRLMAVDDAREAGARALFGEKYGDEVRVVSMGKTARDSGSNALGWSVELCGGTHVKRTGDIGLVSITGESAVASGVRRIEALTGRYARQSANAAINTAKQAAAELRTTVDDMPARIAALMEERKKLERELSDARKKLAMGGGGAAGAADGGADVREVGGVKLMARAVEGIEIKDLKSLVDQGKKQLGSGVIALVATSEDGKGSIVVGVTPDLVARFSAVDLVRTASVVLGGKGGGGKPDMAQAGGPDGSKAQAALDAIAAAIGG.

The Zn(2+) site is built by histidine 564, histidine 568, cysteine 677, and histidine 681.

It belongs to the class-II aminoacyl-tRNA synthetase family. It depends on Zn(2+) as a cofactor.

It is found in the cytoplasm. The catalysed reaction is tRNA(Ala) + L-alanine + ATP = L-alanyl-tRNA(Ala) + AMP + diphosphate. Functionally, catalyzes the attachment of alanine to tRNA(Ala) in a two-step reaction: alanine is first activated by ATP to form Ala-AMP and then transferred to the acceptor end of tRNA(Ala). Also edits incorrectly charged Ser-tRNA(Ala) and Gly-tRNA(Ala) via its editing domain. The polypeptide is Alanine--tRNA ligase (Rhodopseudomonas palustris (strain HaA2)).